The primary structure comprises 231 residues: Urease accessory protein UreF (231 aa).

This sequence belongs to the UreF family. As to quaternary structure, ureD, UreF and UreG form a complex that acts as a GTP-hydrolysis-dependent molecular chaperone, activating the urease apoprotein by helping to assemble the nickel containing metallocenter of UreC. The UreE protein probably delivers the nickel.

Its subcellular location is the cytoplasm. Functionally, required for maturation of urease via the functional incorporation of the urease nickel metallocenter. The protein is Urease accessory protein UreF of Marinobacter nauticus (strain ATCC 700491 / DSM 11845 / VT8) (Marinobacter aquaeolei).